We begin with the raw amino-acid sequence, 363 residues long: Serpentine receptor class beta-18 (363 aa).

7 helical membrane-spanning segments follow: residues 52-72, 92-112, 135-155, 172-192, 218-238, 276-296, and 303-323; these read LAQF…VVYI, MLLF…YHII, FRYT…CIYI, LILA…IIWV, KATI…IGLF, AALM…YNFL, and TIAT…LVIV.

The protein belongs to the nematode receptor-like protein srb family.

It is found in the membrane. The polypeptide is Serpentine receptor class beta-18 (srb-18) (Caenorhabditis elegans).